The chain runs to 1005 residues: uncharacterized protein (1005 aa).

The signal sequence occupies residues 1-24; the sequence is MKFQRKYWGLLSTLGVSSAVALSA. Cys25 carries the N-palmitoyl cysteine lipid modification. A lipid anchor (S-diacylglycerol cysteine) is attached at Cys25. 2 disordered regions span residues 105–165 and 786–825; these read KKDK…EEKF and TQKI…WDDV. 2 stretches are compositionally biased toward low complexity: residues 110–131 and 145–156; these read TSSQ…TSTS and QSSSNGQNNQQS. Residues 786 to 801 are compositionally biased toward polar residues; it reads TQKIDQQNTASTTSDV.

It localises to the cell membrane. This is an uncharacterized protein from Mycoplasma pneumoniae (strain ATCC 29342 / M129 / Subtype 1) (Mycoplasmoides pneumoniae).